The sequence spans 269 residues: Formamidopyrimidine-DNA glycosylase (269 aa).

Residue Pro2 is the Schiff-base intermediate with DNA of the active site. Residue Glu3 is the Proton donor of the active site. Lys57 functions as the Proton donor; for beta-elimination activity in the catalytic mechanism. Positions 90, 109, and 150 each coordinate DNA. Residues 235–269 (QVYGKAGEQCPNCAELIQELKIGQRNTFYCSSCQV) form an FPG-type zinc finger. The Proton donor; for delta-elimination activity role is filled by Arg259.

It belongs to the FPG family. As to quaternary structure, monomer. Zn(2+) is required as a cofactor.

It catalyses the reaction Hydrolysis of DNA containing ring-opened 7-methylguanine residues, releasing 2,6-diamino-4-hydroxy-5-(N-methyl)formamidopyrimidine.. The enzyme catalyses 2'-deoxyribonucleotide-(2'-deoxyribose 5'-phosphate)-2'-deoxyribonucleotide-DNA = a 3'-end 2'-deoxyribonucleotide-(2,3-dehydro-2,3-deoxyribose 5'-phosphate)-DNA + a 5'-end 5'-phospho-2'-deoxyribonucleoside-DNA + H(+). In terms of biological role, involved in base excision repair of DNA damaged by oxidation or by mutagenic agents. Acts as a DNA glycosylase that recognizes and removes damaged bases. Has a preference for oxidized purines, such as 7,8-dihydro-8-oxoguanine (8-oxoG). Has AP (apurinic/apyrimidinic) lyase activity and introduces nicks in the DNA strand. Cleaves the DNA backbone by beta-delta elimination to generate a single-strand break at the site of the removed base with both 3'- and 5'-phosphates. This is Formamidopyrimidine-DNA glycosylase from Vibrio atlanticus (strain LGP32) (Vibrio splendidus (strain Mel32)).